The chain runs to 196 residues: Holliday junction branch migration complex subunit RuvA (196 aa).

Residues 1 to 63 (MYDYIKGILT…EDAHLLYGFA (63 aa)) are domain I. The interval 64 to 142 (TENEKSVFLS…MSEEAGPVQQ (79 aa)) is domain II. The segment at 142–146 (QVAPS) is flexible linker. Residues 147 to 196 (SENIALEEAMEAMEALGYRPAELKKIKKFFEGTNDTAENYIKSALKMLMK) are domain III.

The protein belongs to the RuvA family. In terms of assembly, homotetramer. Forms an RuvA(8)-RuvB(12)-Holliday junction (HJ) complex. HJ DNA is sandwiched between 2 RuvA tetramers; dsDNA enters through RuvA and exits via RuvB. An RuvB hexamer assembles on each DNA strand where it exits the tetramer. Each RuvB hexamer is contacted by two RuvA subunits (via domain III) on 2 adjacent RuvB subunits; this complex drives branch migration. In the full resolvosome a probable DNA-RuvA(4)-RuvB(12)-RuvC(2) complex forms which resolves the HJ.

It is found in the cytoplasm. The RuvA-RuvB-RuvC complex processes Holliday junction (HJ) DNA during genetic recombination and DNA repair, while the RuvA-RuvB complex plays an important role in the rescue of blocked DNA replication forks via replication fork reversal (RFR). RuvA specifically binds to HJ cruciform DNA, conferring on it an open structure. The RuvB hexamer acts as an ATP-dependent pump, pulling dsDNA into and through the RuvAB complex. HJ branch migration allows RuvC to scan DNA until it finds its consensus sequence, where it cleaves and resolves the cruciform DNA. The chain is Holliday junction branch migration complex subunit RuvA from Streptococcus suis (strain 98HAH33).